We begin with the raw amino-acid sequence, 169 residues long: Regulator of G-protein signaling rgs-2 (169 aa).

The RGS domain maps to 39–158 (GWSQSFENLM…FLASNIYKTV (120 aa)).

In terms of processing, may be phosphorylated and activated by egl-4. Expressed in a subset of neurons including ventral cord and head- and tail-ganglia neurons. Also expressed in non-neuronal cells including pharyngeal and uterine muscles.

In terms of biological role, weakly inhibits G protein signaling in nervous system, interacting preferentially with the G(O) subfamily member goa-1. In vitro, it acts as a GTPase activator of goa-1. Rgs-1 and rgs-2 redundantly adjust signaling when worms are fed to allow rapid induction of egg-laying behavior. Modulates chemotaxis responses by regulating negatively the sensitivity to quinine in ASH sensory neurons. This is Regulator of G-protein signaling rgs-2 (rgs-2) from Caenorhabditis elegans.